We begin with the raw amino-acid sequence, 173 residues long: Lens fiber membrane intrinsic protein (173 aa).

Residues methionine 1–serine 3 lie on the Cytoplasmic side of the membrane. The helical transmembrane segment at phenylalanine 4–alanine 24 threads the bilayer. The Extracellular segment spans residues threonine 25–alanine 66. 2 C-linked (Man) tryptophan glycosylation sites follow: tryptophan 43 and tryptophan 61. N-linked (GlcNAc...) asparagine glycosylation is present at asparagine 62. Residues phenylalanine 67 to alanine 87 traverse the membrane as a helical segment. Residues glutamine 88–proline 98 lie on the Cytoplasmic side of the membrane. Residues phenylalanine 99 to tyrosine 119 form a helical membrane-spanning segment. The Extracellular segment spans residues threonine 120–tyrosine 140. Residues isoleucine 141 to tyrosine 161 form a helical membrane-spanning segment. Residues arginine 162–arginine 173 lie on the Cytoplasmic side of the membrane. Position 170 is a phosphoserine (serine 170). Threonine 171 is subject to Phosphothreonine.

It belongs to the PMP-22/EMP/MP20 family. In terms of assembly, seems to be associated with itself or another lens membrane component via disulfide bonds. Eye lens specific.

Its subcellular location is the membrane. In terms of biological role, present in the thicker 16-17 nm junctions of mammalian lens fiber cells, where it may contribute to cell junctional organization. Acts as a receptor for calmodulin. May play an important role in both lens development and cataractogenesis. In Rattus norvegicus (Rat), this protein is Lens fiber membrane intrinsic protein (Lim2).